The chain runs to 198 residues: (S)-2-hydroxypropylphosphonic acid epoxidase (198 aa).

The HTH cro/C1-type domain occupies 15–70 (LKDRREQVKMDHAALASLLGETPETVAAWENGEGGELTLTQLGRIAHVLGTSIGAL). A substrate-binding site is contributed by Lys23. The segment at residues 26-45 (HAALASLLGETPETVAAWEN) is a DNA-binding region (H-T-H motif). Residues Arg97, Tyr105, 135–138 (NSGH), and Glu142 each bind substrate. One can recognise a Cupin type-2 domain in the interval 136-196 (SGHAGNEFLF…GTGSAKLIAV (61 aa)). Residues His138, Glu142, and His180 each contribute to the Fe cation site.

This sequence belongs to the non-heme iron-dependent dioxygenase family. In terms of assembly, homotetramer. It depends on Fe(2+) as a cofactor.

The catalysed reaction is (S)-2-hydroxypropylphosphonate + H2O2 = (1R,2S)-epoxypropylphosphonate + 2 H2O. It participates in antibiotic biosynthesis; fosfomycin biosynthesis. Non-heme-dependent dioxygenase that catalyzes the oxidative epoxidation of (S)-2-hydroxypropylphosphonate into (1R,2S)-epoxypropylphosphonate, the final step in the biosynthesis of fosfomycin antibiotic. This Streptomyces wedmorensis protein is (S)-2-hydroxypropylphosphonic acid epoxidase (hppE).